A 31-amino-acid polypeptide reads, in one-letter code: Cliotide T13 (31 aa).

The cyclopeptide (Asp-Asn) cross-link spans 1-31; that stretch reads DTTPCGESCVWIPCVSSIVGCSCQNKVCYQN. Cystine bridges form between Cys5–Cys21, Cys9–Cys23, and Cys14–Cys28.

In terms of processing, contains 3 disulfide bonds. This is a cyclic peptide. As to expression, expressed in seed but not in root nodules.

In terms of biological role, probably participates in a plant defense mechanism. Not active against Gram-negative bacterium E.coli ATCC 700926 or Gram-positive bacterium S.aureus ATCC 12600 up to a concentration of 100 uM under low-salt conditions. This Clitoria ternatea (Butterfly pea) protein is Cliotide T13.